Here is a 234-residue protein sequence, read N- to C-terminus: Thiamine import ATP-binding protein ThiQ (234 aa).

The 229-residue stretch at L2–L230 folds into the ABC transporter domain. ATP is bound at residue G32–S39.

This sequence belongs to the ABC transporter superfamily. Thiamine importer (TC 3.A.1.19.1) family. The complex is composed of two ATP-binding proteins (ThiQ), two transmembrane proteins (ThiP) and a solute-binding protein (ThiB).

The protein localises to the cell inner membrane. It carries out the reaction thiamine(out) + ATP + H2O = thiamine(in) + ADP + phosphate + H(+). Functionally, part of the ABC transporter complex ThiBPQ involved in thiamine import. Responsible for energy coupling to the transport system. The polypeptide is Thiamine import ATP-binding protein ThiQ (Aliivibrio fischeri (strain ATCC 700601 / ES114) (Vibrio fischeri)).